A 198-amino-acid chain; its full sequence is Adenine phosphoribosyltransferase (198 aa).

Belongs to the purine/pyrimidine phosphoribosyltransferase family. As to quaternary structure, homodimer.

Its subcellular location is the cytoplasm. It carries out the reaction AMP + diphosphate = 5-phospho-alpha-D-ribose 1-diphosphate + adenine. It functions in the pathway purine metabolism; AMP biosynthesis via salvage pathway; AMP from adenine: step 1/1. Its function is as follows. Catalyzes a salvage reaction resulting in the formation of AMP, that is energically less costly than de novo synthesis. The polypeptide is Adenine phosphoribosyltransferase (Serratia proteamaculans (strain 568)).